An 83-amino-acid polypeptide reads, in one-letter code: Small ribosomal subunit protein bS16 (83 aa).

It belongs to the bacterial ribosomal protein bS16 family.

This Shewanella denitrificans (strain OS217 / ATCC BAA-1090 / DSM 15013) protein is Small ribosomal subunit protein bS16.